Here is a 441-residue protein sequence, read N- to C-terminus: tRNA(Ile)-lysidine synthase (441 aa).

27–32 (SGGVDS) lines the ATP pocket.

It belongs to the tRNA(Ile)-lysidine synthase family.

The protein localises to the cytoplasm. The enzyme catalyses cytidine(34) in tRNA(Ile2) + L-lysine + ATP = lysidine(34) in tRNA(Ile2) + AMP + diphosphate + H(+). In terms of biological role, ligates lysine onto the cytidine present at position 34 of the AUA codon-specific tRNA(Ile) that contains the anticodon CAU, in an ATP-dependent manner. Cytidine is converted to lysidine, thus changing the amino acid specificity of the tRNA from methionine to isoleucine. The chain is tRNA(Ile)-lysidine synthase from Proteus mirabilis (strain HI4320).